A 303-amino-acid polypeptide reads, in one-letter code: UDP-3-O-acyl-N-acetylglucosamine deacetylase (303 aa).

Residues His-78, His-237, and Asp-241 each coordinate Zn(2+). His-264 acts as the Proton donor in catalysis.

This sequence belongs to the LpxC family. The cofactor is Zn(2+).

The catalysed reaction is a UDP-3-O-[(3R)-3-hydroxyacyl]-N-acetyl-alpha-D-glucosamine + H2O = a UDP-3-O-[(3R)-3-hydroxyacyl]-alpha-D-glucosamine + acetate. It participates in glycolipid biosynthesis; lipid IV(A) biosynthesis; lipid IV(A) from (3R)-3-hydroxytetradecanoyl-[acyl-carrier-protein] and UDP-N-acetyl-alpha-D-glucosamine: step 2/6. Catalyzes the hydrolysis of UDP-3-O-myristoyl-N-acetylglucosamine to form UDP-3-O-myristoylglucosamine and acetate, the committed step in lipid A biosynthesis. This Pseudomonas syringae pv. tomato (strain ATCC BAA-871 / DC3000) protein is UDP-3-O-acyl-N-acetylglucosamine deacetylase.